The primary structure comprises 2185 residues: DNA polymerase epsilon catalytic subunit A (2185 aa).

4 residues coordinate Zn(2+): Cys-2072, Cys-2075, Cys-2094, and Cys-2097. Residues 2072–2097 form a CysA-type zinc finger; the sequence is CEHCSYISDIDICRESMERVFICQSC. 4 residues coordinate [4Fe-4S] cluster: Cys-2128, Cys-2131, Cys-2143, and Cys-2145. Positions 2128–2145 match the CysB motif motif; the sequence is CNKCHKIKEDAMSPYCPC.

It belongs to the DNA polymerase type-B family. As to quaternary structure, heterotetramer. Consists of 4 subunits: POL2, DPB2, DPB3 and DPB4. The cofactor is [4Fe-4S] cluster.

Its subcellular location is the nucleus. It carries out the reaction DNA(n) + a 2'-deoxyribonucleoside 5'-triphosphate = DNA(n+1) + diphosphate. DNA polymerase II participates in chromosomal DNA replication. The sequence is that of DNA polymerase epsilon catalytic subunit A (POL2) from Kluyveromyces lactis (strain ATCC 8585 / CBS 2359 / DSM 70799 / NBRC 1267 / NRRL Y-1140 / WM37) (Yeast).